A 678-amino-acid polypeptide reads, in one-letter code: Protein hook (678 aa).

Residues 1-155 are interaction with microtubules; the sequence is MSTQNGMYYS…NIMRALQELE (155 aa). The Calponin-homology (CH) domain maps to 5 to 123; it reads NGMYYSLLEW…RLLQLVLGCA (119 aa). 2 coiled-coil regions span residues 135–435 and 479–589; these read EIMC…LKCG and QTAL…AKEV.

It belongs to the hook family. As to quaternary structure, homodimer. Interacts with microtubules via its N-terminus.

The protein localises to the cytoplasm. Its subcellular location is the cytoskeleton. It localises to the endosome. It is found in the synapse. Involved in endocytic trafficking by stabilizing organelles of the endocytic pathway. Probably acts as a cytoskeletal linker protein required to tether endosome vesicles to the cytoskeleton. Involved in modulation of endocytosis at stages required for down-regulation of membrane proteins that control synapse size. Not involved in synaptic vesicle recycling. Required in R7 cells for boss endocytosis into multivesicular bodies (MVBs). Has a role in regulating adult longevity. This is Protein hook from Drosophila virilis (Fruit fly).